The primary structure comprises 108 residues: uncharacterized protein (108 aa).

Residues 39-68 (GLRSRSGTGSGNSRNGLKESGGSRSGPGKP) show a composition bias toward low complexity. A disordered region spans residues 39–95 (GLRSRSGTGSGNSRNGLKESGGSRSGPGKPRGNRKSSRRIRPRPTSEKPRGYWRSSW). A compositionally biased stretch (basic residues) spans 69–80 (RGNRKSSRRIRP).

This is an uncharacterized protein from Acidithiobacillus ferridurans.